The sequence spans 334 residues: D-alanine--D-alanine ligase (334 aa).

Residues 114-314 (KRIWRFEGLP…YEELCLRILA (201 aa)) form the ATP-grasp domain. 140-195 (LEDLGSPMIVKPSREGSTIGLTKVTSPGQCEQAYRLASRYDPEVLCEQFIEGEETT) is an ATP binding site. Mg(2+)-binding residues include D267, E281, and N283.

Belongs to the D-alanine--D-alanine ligase family. The cofactor is Mg(2+). Mn(2+) is required as a cofactor.

It localises to the cytoplasm. The catalysed reaction is 2 D-alanine + ATP = D-alanyl-D-alanine + ADP + phosphate + H(+). It participates in cell wall biogenesis; peptidoglycan biosynthesis. Functionally, cell wall formation. In Paracidovorax citrulli (strain AAC00-1) (Acidovorax citrulli), this protein is D-alanine--D-alanine ligase.